Here is a 204-residue protein sequence, read N- to C-terminus: Putative rubrerythrin (204 aa).

Positions 1-159 (MINNFFVINM…KLLKEVEEGT (159 aa)) constitute a Ferritin-like diiron domain. E24, E57, E107, E110, E141, H144, C171, C174, C187, and C190 together coordinate Fe(3+). The Rubredoxin-like domain maps to 166 to 204 (PVEWVCRKCGFVHLGKEPPEKCPSCSHPRKYFEVKCEKY).

In terms of assembly, homodimer. Possesses two rubredoxin-like centers and two non-sulfur oxo-bridged di-iron centers per dimer. It depends on Fe(3+) as a cofactor.

It localises to the cytoplasm. Functionally, may provide oxidative stress protection via catalytic reduction of intracellular hydrogen peroxide. The protein is Putative rubrerythrin of Methanocaldococcus jannaschii (strain ATCC 43067 / DSM 2661 / JAL-1 / JCM 10045 / NBRC 100440) (Methanococcus jannaschii).